Consider the following 191-residue polypeptide: Inosine triphosphate pyrophosphatase (191 aa).

15-20 lines the ITP pocket; the sequence is TGNTNK. Glu43 is a Mg(2+) binding site. Residues Lys55, 71-72, Lys88, 147-150, Lys168, and 173-174 each bind ITP; these read DT, FGWD, and HR.

This sequence belongs to the HAM1 NTPase family. As to quaternary structure, homodimer. Mg(2+) is required as a cofactor. Mn(2+) serves as cofactor.

The protein resides in the cytoplasm. It is found in the nucleus. It carries out the reaction ITP + H2O = IMP + diphosphate + H(+). The catalysed reaction is dITP + H2O = dIMP + diphosphate + H(+). The enzyme catalyses XTP + H2O = XMP + diphosphate + H(+). In terms of biological role, pyrophosphatase that hydrolyzes non-canonical purine nucleotides such as inosine triphosphate (ITP), deoxyinosine triphosphate (dITP) or xanthosine 5'-triphosphate (XTP) to their respective monophosphate derivatives. The enzyme does not distinguish between the deoxy- and ribose forms. Probably excludes non-canonical purines from RNA and DNA precursor pools, thus preventing their incorporation into RNA and DNA and avoiding chromosomal lesions. The chain is Inosine triphosphate pyrophosphatase from Chaetomium globosum (strain ATCC 6205 / CBS 148.51 / DSM 1962 / NBRC 6347 / NRRL 1970) (Soil fungus).